Reading from the N-terminus, the 638-residue chain is ATP-dependent rRNA helicase spb4 (638 aa).

The Q motif motif lies at 14-42 (WDAVNPPLSEWVLDAVSSMGFTRMTPVQA). In terms of domain architecture, Helicase ATP-binding spans 45 to 249 (IPLFMAHKDV…RVGLRNPVKV (205 aa)). Residue 58–65 (AVTGSGKT) participates in ATP binding. Positions 197-200 (DEAD) match the DEAD box motif. Residues 283–437 (ALKHILNSVQ…PITVSDAEAA (155 aa)) enclose the Helicase C-terminal domain. Residues 521–629 (AYKDKQREKR…AKADKDAEEG (109 aa)) are a coiled coil. The disordered stretch occupies residues 538 to 638 (MAESGQQQTT…GGDEEFTGFD (101 aa)). Positions 574 to 597 (MKQVRQERKRWEKMTEEEKKKALE) are enriched in basic and acidic residues. Residues 625–638 (DAEEGGDEEFTGFD) are compositionally biased toward acidic residues.

It belongs to the DEAD box helicase family. DDX55/SPB4 subfamily. In terms of assembly, component of pre-60S ribosomal complexes.

The protein resides in the nucleus. The protein localises to the nucleolus. It catalyses the reaction ATP + H2O = ADP + phosphate + H(+). In terms of biological role, ATP-binding RNA helicase involved in the biogenesis of 60S ribosomal subunits. Binds 90S pre-ribosomal particles and dissociates from pre-60S ribosomal particles after processing of 27SB pre-rRNA. Required for the normal formation of 18S rRNA through the processing of pre-rRNAs at sites A0, A1 and A2, and the normal formation of 25S and 5.8S rRNAs through the processing of pre-rRNAs at sites C1 and C2. The polypeptide is ATP-dependent rRNA helicase spb4 (Emericella nidulans (strain FGSC A4 / ATCC 38163 / CBS 112.46 / NRRL 194 / M139) (Aspergillus nidulans)).